Here is a 265-residue protein sequence, read N- to C-terminus: GTP cyclohydrolase FolE2 (265 aa).

This sequence belongs to the GTP cyclohydrolase IV family.

The catalysed reaction is GTP + H2O = 7,8-dihydroneopterin 3'-triphosphate + formate + H(+). The protein operates within cofactor biosynthesis; 7,8-dihydroneopterin triphosphate biosynthesis; 7,8-dihydroneopterin triphosphate from GTP: step 1/1. Functionally, converts GTP to 7,8-dihydroneopterin triphosphate. The chain is GTP cyclohydrolase FolE2 from Magnetococcus marinus (strain ATCC BAA-1437 / JCM 17883 / MC-1).